Consider the following 215-residue polypeptide: Adenylate kinase (215 aa).

10 to 15 (GAGKGT) is a binding site for ATP. Residues 30–59 (STGDMFRLAIKEGTELGKKAKEFMDQGDLV) form an NMP region. AMP is bound by residues threonine 31, arginine 36, 57 to 59 (DLV), 85 to 88 (GFPR), and glutamine 92. The interval 126–163 (GRRICPTCGTAYHVVYNPPKEEGICDKDGSQLIQRDDD) is LID. Arginine 127 is an ATP binding site. Residues cysteine 130, cysteine 133, cysteine 150, and aspartate 153 each contribute to the Zn(2+) site. The AMP site is built by arginine 160 and arginine 171. Residue arginine 199 participates in ATP binding.

This sequence belongs to the adenylate kinase family. Monomer.

The protein localises to the cytoplasm. The enzyme catalyses AMP + ATP = 2 ADP. The protein operates within purine metabolism; AMP biosynthesis via salvage pathway; AMP from ADP: step 1/1. Catalyzes the reversible transfer of the terminal phosphate group between ATP and AMP. Plays an important role in cellular energy homeostasis and in adenine nucleotide metabolism. The chain is Adenylate kinase from Oceanobacillus iheyensis (strain DSM 14371 / CIP 107618 / JCM 11309 / KCTC 3954 / HTE831).